A 492-amino-acid polypeptide reads, in one-letter code: JmjC domain-containing histone demethylation protein 1 (492 aa).

A PHD-type; atypical zinc finger spans residues 4–72 (PNICQHCQLK…SYRCPNHKEG (69 aa)). The 156-residue stretch at 254–409 (TAVRQNDLVD…THLKIVEIEK (156 aa)) folds into the JmjC domain. Residue threonine 302 participates in substrate binding. Fe cation-binding residues include histidine 305 and aspartate 307. Lysine 322 provides a ligand contact to substrate. Residue histidine 377 participates in Fe cation binding.

It belongs to the JHDM1 histone demethylase family. The cofactor is Fe(2+).

It localises to the nucleus. The catalysed reaction is N(6),N(6)-dimethyl-L-lysyl(36)-[histone H3] + 2 2-oxoglutarate + 2 O2 = L-lysyl(36)-[histone H3] + 2 formaldehyde + 2 succinate + 2 CO2. In terms of biological role, histone demethylase that specifically demethylates 'Lys-36' of histone H3, thereby playing a central role in histone code. Does not demethylate H3 'Lys-4' nor 'Lys-79'. In Saccharomyces cerevisiae (strain ATCC 204508 / S288c) (Baker's yeast), this protein is JmjC domain-containing histone demethylation protein 1 (JHD1).